A 244-amino-acid chain; its full sequence is MSSSEGNKPPLVPDSTKESEPQFDPTARTRNWFSILLGTMPPSHQILYREDQYARHEKRDCDRCEEWRDYNLKYSPIVIFMQKNIRDLNGKLDADNIRCRRCPTRITEDGKTVRQGGGFSPEHGIQLCANEMRDSKHVEDTLAHEMVHAWDHLRWKVDWGDLRHAACSEIRAASLSGECRWAREFWTRNNYRVTQQHQDCVRRRAVKSVLARPWCKDDVQAVRVVNEVWDSCYSDTRPFDEIYK.

Positions 1–25 are disordered; that stretch reads MSSSEGNKPPLVPDSTKESEPQFDP. Residue His144 participates in a divalent metal cation binding. Glu145 is a catalytic residue. Position 148 (His148) interacts with a divalent metal cation.

Belongs to the peptidase M76 family.

Its subcellular location is the mitochondrion inner membrane. Functionally, has a dual role in the assembly of mitochondrial ATPase. Acts as a protease that removes N-terminal residues of mitochondrial ATPase CF(0) subunit 6 at the intermembrane space side. Also involved in the correct assembly of the membrane-embedded ATPase CF(0) particle, probably mediating association of subunit 6 with the subunit 9 ring. The chain is Mitochondrial inner membrane protease atp23 (atp23) from Botryotinia fuckeliana (strain B05.10) (Noble rot fungus).